A 207-amino-acid polypeptide reads, in one-letter code: Abscisic acid receptor PYL4 (207 aa).

The interval 45–195 is START-like; the sequence is HEVGPNQCCS…NLQSLAKIAE (151 aa). A disulfide bond links Cys52 and Cys176. Abscisate contacts are provided by residues Lys81, 111–116, 138–144, and Glu160; these read AASSTE and RLSNYRS. The short motif at 107-111 is the Gate loop element; it reads SGLPA. Residues 137 to 139 carry the Latch loop motif; that stretch reads HRL.

Belongs to the PYR/PYL/RCAR abscisic acid intracellular receptor family. Monomer. Homodimer. Binds ABA on one subunit only. Interacts with HAB1, ABI1 and ABI2, and possibly with other PP2Cs. Binds to CARs protein in an ABA-independent manner, both at the plasma membrane and in the nucleus. Interacts directly with CAR1 and CAR4. Interacts with TOPP1. Interacts with DDA1. Interacts with FREE1 (via N-terminus). Interacts with the E3 ubiquitin-protein ligase RSL1 at the plasma membrane. Ubiquitynated and degraded by the proteasome upon binding to the E3 ubiquitin-protein ligase RSL1 at the plasma membrane.

It localises to the cytoplasm. Its subcellular location is the nucleus. The protein resides in the cell membrane. The protein localises to the vacuole. Receptor for abscisic acid (ABA) required for ABA-mediated responses such as stomatal closure and germination inhibition. Inhibits the activity of group-A protein phosphatases type 2C (PP2Cs) when activated by ABA. Can be activated by both (-)-ABA and (+)-ABA. This is Abscisic acid receptor PYL4 from Arabidopsis thaliana (Mouse-ear cress).